Here is an 809-residue protein sequence, read N- to C-terminus: Glycerol-3-phosphate acyltransferase (809 aa).

The short motif at 309–314 is the HXXXXD motif element; sequence HRSHMD.

Belongs to the GPAT/DAPAT family.

The protein resides in the cell inner membrane. It carries out the reaction sn-glycerol 3-phosphate + an acyl-CoA = a 1-acyl-sn-glycero-3-phosphate + CoA. It functions in the pathway phospholipid metabolism; CDP-diacylglycerol biosynthesis; CDP-diacylglycerol from sn-glycerol 3-phosphate: step 1/3. This is Glycerol-3-phosphate acyltransferase from Shewanella oneidensis (strain ATCC 700550 / JCM 31522 / CIP 106686 / LMG 19005 / NCIMB 14063 / MR-1).